Reading from the N-terminus, the 218-residue chain is Probable nicotinate-nucleotide adenylyltransferase (218 aa).

The protein belongs to the NadD family.

It carries out the reaction nicotinate beta-D-ribonucleotide + ATP + H(+) = deamido-NAD(+) + diphosphate. Its pathway is cofactor biosynthesis; NAD(+) biosynthesis; deamido-NAD(+) from nicotinate D-ribonucleotide: step 1/1. Functionally, catalyzes the reversible adenylation of nicotinate mononucleotide (NaMN) to nicotinic acid adenine dinucleotide (NaAD). The chain is Probable nicotinate-nucleotide adenylyltransferase from Corynebacterium glutamicum (strain ATCC 13032 / DSM 20300 / JCM 1318 / BCRC 11384 / CCUG 27702 / LMG 3730 / NBRC 12168 / NCIMB 10025 / NRRL B-2784 / 534).